The primary structure comprises 506 residues: Maturase K (506 aa).

It belongs to the intron maturase 2 family. MatK subfamily.

It localises to the plastid. The protein resides in the chloroplast. Usually encoded in the trnK tRNA gene intron. Probably assists in splicing its own and other chloroplast group II introns. This is Maturase K from Trifolium incarnatum (Crimson clover).